We begin with the raw amino-acid sequence, 94 residues long: Co-chaperonin GroES (94 aa).

Belongs to the GroES chaperonin family. As to quaternary structure, heptamer of 7 subunits arranged in a ring. Interacts with the chaperonin GroEL.

The protein resides in the cytoplasm. Functionally, together with the chaperonin GroEL, plays an essential role in assisting protein folding. The GroEL-GroES system forms a nano-cage that allows encapsulation of the non-native substrate proteins and provides a physical environment optimized to promote and accelerate protein folding. GroES binds to the apical surface of the GroEL ring, thereby capping the opening of the GroEL channel. The protein is Co-chaperonin GroES of Staphylococcus epidermidis (strain ATCC 35984 / DSM 28319 / BCRC 17069 / CCUG 31568 / BM 3577 / RP62A).